A 340-amino-acid polypeptide reads, in one-letter code: Ketol-acid reductoisomerase (NADP(+)) (340 aa).

A KARI N-terminal Rossmann domain is found at 1–183 (MAITVYYDKD…GGGRTGIIET (183 aa)). NADP(+)-binding positions include 26-29 (FGSQ), R49, S52, S54, and 84-87 (DEIQ). Residue H109 is part of the active site. An NADP(+)-binding site is contributed by G135. The KARI C-terminal knotted domain maps to 184–329 (TFKAETETDL…RNLRAMMPWI (146 aa)). 4 residues coordinate Mg(2+): D192, E196, E228, and E232. A substrate-binding site is contributed by S253.

Belongs to the ketol-acid reductoisomerase family. Mg(2+) serves as cofactor.

The catalysed reaction is (2R)-2,3-dihydroxy-3-methylbutanoate + NADP(+) = (2S)-2-acetolactate + NADPH + H(+). It carries out the reaction (2R,3R)-2,3-dihydroxy-3-methylpentanoate + NADP(+) = (S)-2-ethyl-2-hydroxy-3-oxobutanoate + NADPH + H(+). It functions in the pathway amino-acid biosynthesis; L-isoleucine biosynthesis; L-isoleucine from 2-oxobutanoate: step 2/4. Its pathway is amino-acid biosynthesis; L-valine biosynthesis; L-valine from pyruvate: step 2/4. In terms of biological role, involved in the biosynthesis of branched-chain amino acids (BCAA). Catalyzes an alkyl-migration followed by a ketol-acid reduction of (S)-2-acetolactate (S2AL) to yield (R)-2,3-dihydroxy-isovalerate. In the isomerase reaction, S2AL is rearranged via a Mg-dependent methyl migration to produce 3-hydroxy-3-methyl-2-ketobutyrate (HMKB). In the reductase reaction, this 2-ketoacid undergoes a metal-dependent reduction by NADPH to yield (R)-2,3-dihydroxy-isovalerate. The sequence is that of Ketol-acid reductoisomerase (NADP(+)) from Campylobacter jejuni subsp. jejuni serotype O:6 (strain 81116 / NCTC 11828).